The primary structure comprises 312 residues: MEVSEFEALRQHLMSVAYRLTGTVADAEDIVQEAWLRWDSPDTVIADPRAWLTTVVSRLGLDKLRSAAHRRETYTGTWLPEPVVTGLDATDPLAAVVAAEDARFAAMVVLERLRPDQRVAFVLHDGFAVPFAEVAEVLGTSEAAARQLASRARKAVTAQPALISGDPDPAHNEVVGRLMAAMAAGDLDTVVSLLHPDVTFTGDSNGKAPTAVRAVRGSDKVVRFILGLVQRYGPGLFGANQLALVNGELGAYTAGLPGVDGYRAMAPRITAITVRDGKVCALWDIANPDKFTGSPLKERRAQPTGRGRHHRN.

The sigma-70 factor domain-2 stretch occupies residues 6–65 (FEALRQHLMSVAYRLTGTVADAEDIVQEAWLRWDSPDTVIADPRAWLTTVVSRLGLDKLR). Positions 29–32 (DIVQ) match the Polymerase core binding motif. The sigma-70 factor domain-4 stretch occupies residues 107–155 (MVVLERLRPDQRVAFVLHDGFAVPFAEVAEVLGTSEAAARQLASRARKA). The H-T-H motif DNA-binding region spans 131–150 (FAEVAEVLGTSEAAARQLAS). The segment at 293–312 (GSPLKERRAQPTGRGRHHRN) is disordered.

The protein belongs to the sigma-70 factor family. ECF subfamily. As to quaternary structure, interacts transiently with the RNA polymerase catalytic core formed by RpoA, RpoB, RpoC and RpoZ (2 alpha, 1 beta, 1 beta' and 1 omega subunit) to form the RNA polymerase holoenzyme that can initiate transcription.

Sigma factors are initiation factors that promote the attachment of RNA polymerase to specific initiation sites and are then released. Extracytoplasmic function (ECF) sigma factors are held in an inactive form by an anti-sigma factor until released, although no anti-sigma factor is known for this protein. Regulates the promoter of SigI, may not be autoregulated. In Mycobacterium tuberculosis (strain ATCC 25618 / H37Rv), this protein is ECF RNA polymerase sigma factor SigJ (sigJ).